Here is a 670-residue protein sequence, read N- to C-terminus: UvrABC system protein B (670 aa).

The region spanning 26 to 183 (EGLENGLAHQ…RRLSELQYSR (158 aa)) is the Helicase ATP-binding domain. Residue 39 to 46 (GVTGSGKT) coordinates ATP. The Beta-hairpin motif lies at 92–115 (YYDYYQPEAYVPSSDTFIEKDASV). In terms of domain architecture, Helicase C-terminal spans 431–597 (QVDDLLSEIR…GLNKKIGDIL (167 aa)). The segment at 600–620 (GQPSTRGKGKGRGGKVADTNN) is disordered. The 36-residue stretch at 630 to 665 (DQKIRELEAKMYTHAQNLEFEQAAELRDQVHQLRQQ) folds into the UVR domain.

It belongs to the UvrB family. Forms a heterotetramer with UvrA during the search for lesions. Interacts with UvrC in an incision complex.

The protein resides in the cytoplasm. Its function is as follows. The UvrABC repair system catalyzes the recognition and processing of DNA lesions. A damage recognition complex composed of 2 UvrA and 2 UvrB subunits scans DNA for abnormalities. Upon binding of the UvrA(2)B(2) complex to a putative damaged site, the DNA wraps around one UvrB monomer. DNA wrap is dependent on ATP binding by UvrB and probably causes local melting of the DNA helix, facilitating insertion of UvrB beta-hairpin between the DNA strands. Then UvrB probes one DNA strand for the presence of a lesion. If a lesion is found the UvrA subunits dissociate and the UvrB-DNA preincision complex is formed. This complex is subsequently bound by UvrC and the second UvrB is released. If no lesion is found, the DNA wraps around the other UvrB subunit that will check the other stand for damage. In Yersinia enterocolitica serotype O:8 / biotype 1B (strain NCTC 13174 / 8081), this protein is UvrABC system protein B.